The chain runs to 604 residues: Aspartate--tRNA(Asp/Asn) ligase (604 aa).

Glutamate 169 contacts L-aspartate. The aspartate stretch occupies residues 193-196 (QLFK). Arginine 215 lines the L-aspartate pocket. ATP contacts are provided by residues 215 to 217 (RDE) and glutamine 224. Histidine 456 is a binding site for L-aspartate. Glutamate 490 serves as a coordination point for ATP. Arginine 497 provides a ligand contact to L-aspartate. 542-545 (GWDR) contributes to the ATP binding site. Residues 571 to 604 (PLTGAPAPITAQQRKEAGVDAQPEPKQAEAEPEA) are disordered.

This sequence belongs to the class-II aminoacyl-tRNA synthetase family. Type 1 subfamily. As to quaternary structure, homodimer.

The protein resides in the cytoplasm. The enzyme catalyses tRNA(Asx) + L-aspartate + ATP = L-aspartyl-tRNA(Asx) + AMP + diphosphate. Its function is as follows. Aspartyl-tRNA synthetase with relaxed tRNA specificity since it is able to aspartylate not only its cognate tRNA(Asp) but also tRNA(Asn). Reaction proceeds in two steps: L-aspartate is first activated by ATP to form Asp-AMP and then transferred to the acceptor end of tRNA(Asp/Asn). This Micrococcus luteus (strain ATCC 4698 / DSM 20030 / JCM 1464 / CCM 169 / CCUG 5858 / IAM 1056 / NBRC 3333 / NCIMB 9278 / NCTC 2665 / VKM Ac-2230) (Micrococcus lysodeikticus) protein is Aspartate--tRNA(Asp/Asn) ligase.